The sequence spans 132 residues: UPF0299 membrane protein KPN78578_25390 (132 aa).

4 helical membrane passes run 5 to 25, 38 to 60, 66 to 86, and 93 to 113; these read LTIIWQYLRAFVLIYACLYAG, GSIIGMLILFVLLALQIMPPQWV, ILIRYMALLFVPIGVGVMQYW, and LGPVVISCAISTLVVFVVVSW.

This sequence belongs to the UPF0299 family.

The protein localises to the cell inner membrane. The sequence is that of UPF0299 membrane protein KPN78578_25390 from Klebsiella pneumoniae subsp. pneumoniae (strain ATCC 700721 / MGH 78578).